We begin with the raw amino-acid sequence, 149 residues long: Cytochrome c' (149 aa).

Positions 1–19 (MRRVLLATLMAALPAAAMA) are cleaved as a signal peptide. The heme c site is built by Arg-29, Thr-89, Ala-90, Cys-138, Cys-141, and His-142.

As to quaternary structure, monomer and homodimer. Binds 1 heme c group covalently per subunit.

Functionally, cytochrome c' is the most widely occurring bacterial c-type cytochrome. Cytochromes c' are high-spin proteins and the heme has no sixth ligand. Their exact function is not known. This is Cytochrome c' (cycP) from Cereibacter sphaeroides (strain ATCC 17023 / DSM 158 / JCM 6121 / CCUG 31486 / LMG 2827 / NBRC 12203 / NCIMB 8253 / ATH 2.4.1.) (Rhodobacter sphaeroides).